We begin with the raw amino-acid sequence, 164 residues long: UPF0114 protein KPN78578_33570 (164 aa).

The next 4 helical transmembrane spans lie at 15 to 35, 53 to 73, 109 to 126, and 136 to 156; these read LLAPVYFGLSLGLIALTIKFF, MILTLLSLVDMTLVGGLLVMV, VAASIVAISSIHLLRVFM, and LMWYVIIHLTFVLSAFVMGYL.

The protein belongs to the UPF0114 family.

The protein resides in the cell membrane. In Klebsiella pneumoniae subsp. pneumoniae (strain ATCC 700721 / MGH 78578), this protein is UPF0114 protein KPN78578_33570.